Here is a 681-residue protein sequence, read N- to C-terminus: Glutamine--fructose-6-phosphate aminotransferase [isomerizing] 1 (681 aa).

Residue Cys-2 is the For GATase activity of the active site. The Glutamine amidotransferase type-2 domain occupies 2–287; sequence CGIFAYLNYH…DDDVAAVVDG (286 aa). Phosphoserine is present on residues Ser-103 and Ser-243. The isomerase stretch occupies residues 295–662; sequence KRTARDHPGR…LQLLAFHLAV (368 aa). SIS domains lie at 359 to 498 and 530 to 671; these read HIKE…DRIS and LATE…VDFP. Substrate contacts are provided by residues 376 to 377, 421 to 423, Thr-426, and His-577; these read TS and SQS.

Homotetramer, may also exist as homodimers.

The catalysed reaction is D-fructose 6-phosphate + L-glutamine = D-glucosamine 6-phosphate + L-glutamate. It functions in the pathway nucleotide-sugar biosynthesis; UDP-N-acetyl-alpha-D-glucosamine biosynthesis; alpha-D-glucosamine 6-phosphate from D-fructose 6-phosphate: step 1/1. With respect to regulation, inhibited by 4,4'-dithiodipyridine. In terms of biological role, controls the flux of glucose into the hexosamine pathway. Most likely involved in regulating the availability of precursors for N- and O-linked glycosylation of proteins. Regulates the circadian expression of clock genes BMAL1 and CRY1. Has a role in fine tuning the metabolic fluctuations of cytosolic UDP-GlcNAc and its effects on hyaluronan synthesis that occur during tissue remodeling. The chain is Glutamine--fructose-6-phosphate aminotransferase [isomerizing] 1 (Gfpt1) from Rattus norvegicus (Rat).